A 97-amino-acid polypeptide reads, in one-letter code: YcgL domain-containing protein PA1295 (97 aa).

The YcgL domain maps to 3–87; the sequence is RICSVYKSPR…GEEEYIEHLP (85 aa).

This chain is YcgL domain-containing protein PA1295, found in Pseudomonas aeruginosa (strain ATCC 15692 / DSM 22644 / CIP 104116 / JCM 14847 / LMG 12228 / 1C / PRS 101 / PAO1).